Reading from the N-terminus, the 133-residue chain is DNA-directed RNA polymerase subunit omega (133 aa).

Belongs to the RNA polymerase subunit omega family. In terms of assembly, the RNAP catalytic core consists of 2 alpha, 1 beta, 1 beta' and 1 omega subunit. When a sigma factor is associated with the core the holoenzyme is formed, which can initiate transcription.

It catalyses the reaction RNA(n) + a ribonucleoside 5'-triphosphate = RNA(n+1) + diphosphate. Promotes RNA polymerase assembly. Latches the N- and C-terminal regions of the beta' subunit thereby facilitating its interaction with the beta and alpha subunits. The polypeptide is DNA-directed RNA polymerase subunit omega (Brucella abortus (strain S19)).